Here is a 275-residue protein sequence, read N- to C-terminus: Exosome complex component Rrp42 (275 aa).

This sequence belongs to the RNase PH family. Rrp42 subfamily. As to quaternary structure, component of the archaeal exosome complex. Forms a hexameric ring-like arrangement composed of 3 Rrp41-Rrp42 heterodimers. The hexameric ring associates with a trimer of Rrp4 and/or Csl4 subunits.

The protein localises to the cytoplasm. Functionally, non-catalytic component of the exosome, which is a complex involved in RNA degradation. Contributes to the structuring of the Rrp41 active site. The protein is Exosome complex component Rrp42 of Saccharolobus islandicus (strain Y.N.15.51 / Yellowstone #2) (Sulfolobus islandicus).